The chain runs to 243 residues: Protein IN2-1 homolog A (243 aa).

The GST N-terminal domain maps to 31 to 112 (GTTRLYICYF…YIDSHFEGPA (82 aa)). Residues K70, V84, and 96-97 (ES) each bind glutathione. Positions 117–240 (DPEKRQFADE…YLLDLAKTHL (124 aa)) constitute a GST C-terminal domain.

It belongs to the GST superfamily. HSP26 family.

The sequence is that of Protein IN2-1 homolog A from Oryza sativa subsp. japonica (Rice).